Consider the following 532-residue polypeptide: Probable cytochrome P450 524A1 (532 aa).

A helical membrane pass occupies residues phenylalanine 8–valine 28. Residue cysteine 478 participates in heme binding.

It belongs to the cytochrome P450 family. It depends on heme as a cofactor.

The protein localises to the membrane. This is Probable cytochrome P450 524A1 (cyp524A1) from Dictyostelium discoideum (Social amoeba).